The primary structure comprises 254 residues: Lipid uptake coordinator A (254 aa).

A run of 4 helical transmembrane segments spans residues 5–25 (VAVL…FYFV), 44–64 (LRIA…FTLL), 85–105 (IMAH…EVWL), and 114–134 (LFGI…GFYL). Residues 143–254 (PPPKPLKPKK…SGVQVAKVDE (112 aa)) are disordered. A compositionally biased stretch (basic residues) spans 148 to 163 (LKPKKPKQRRLRRKKT). Acidic residues predominate over residues 169–191 (AEPEAAEEAENTELAAQEDEEAV). Low complexity predominate over residues 192 to 220 (EAPPESIESPGGEPESATREAPAAETATA). Residues 227-244 (LRNRRPTGKTSHRRRRTR) are compositionally biased toward basic residues.

Interacts with the Mce1 and Mce4 accessory subunits Rv0199/OmamA, Rv0177/Mam1C and Rv3492c/Mam4B.

It is found in the cell membrane. Functionally, required for the import of both fatty acids and cholesterol during growth in macrophages and in axenic culture. Facilitates the uptake of these lipids by stabilizing protein subunits of the Mce1 and Mce4 multi-subunit transporters, which transport fatty acids and cholesterol, respectively. Required for full virulence in vivo. This Mycobacterium tuberculosis (strain ATCC 25618 / H37Rv) protein is Lipid uptake coordinator A.